Consider the following 282-residue polypeptide: Malonyl-[acyl-carrier protein] O-methyltransferase 1 (282 aa).

The protein belongs to the methyltransferase superfamily.

The catalysed reaction is malonyl-[ACP] + S-adenosyl-L-methionine = malonyl-[ACP] methyl ester + S-adenosyl-L-homocysteine. It participates in cofactor biosynthesis; biotin biosynthesis. Its function is as follows. Converts the free carboxyl group of a malonyl-thioester to its methyl ester by transfer of a methyl group from S-adenosyl-L-methionine (SAM). It allows to synthesize pimeloyl-ACP via the fatty acid synthetic pathway. This Coxiella burnetii (strain RSA 493 / Nine Mile phase I) protein is Malonyl-[acyl-carrier protein] O-methyltransferase 1.